The following is a 338-amino-acid chain: Phosphonates-binding periplasmic protein (338 aa).

Positions 1–26 are cleaved as a signal peptide; the sequence is MNAKIIASLAFTSMFSLSTLLSPAHA.

The protein belongs to the phosphate/phosphite/phosphonate binding protein family. In terms of assembly, the complex is composed of two ATP-binding proteins (PhnC), two transmembrane proteins (PhnE) and a solute-binding protein (PhnD).

Its subcellular location is the periplasm. In terms of biological role, phosphonate binding protein that is part of the phosphonate uptake system. Exhibits high affinity for 2-aminoethylphosphonate, and somewhat less affinity to ethylphosphonate, methylphosphonate, phosphonoacetate and phenylphosphonate. This chain is Phosphonates-binding periplasmic protein (phnD), found in Escherichia coli (strain K12).